Here is a 241-residue protein sequence, read N- to C-terminus: MPVASLSLFRFDGTSSLPWVISQMILSRRPLNDEPRVKFYKLCGSGTGEGFTPKPNWRVWAIMAAFDTEADARDVTANHPVWKRWRAHAAETLVLHLQPLSARGTWGGVNPFLPEQVAEPSPDEPVVALTRAAIKPHKANAFWSRVPKISEKVGEDQNLMFKIGIGEIPLFHQVTFSIWPDVAKMNAFARGDTPHGKAIRAAREEGWFTEELYARFRLLGTEGSWMGKDPLASKVLERETA.

The protein belongs to the CrtA family. Heme serves as cofactor.

The enzyme catalyses spheroidene + 4 reduced [2Fe-2S]-[ferredoxin] + 2 O2 + 4 H(+) = spheroiden-2-one + 4 oxidized [2Fe-2S]-[ferredoxin] + 3 H2O. The catalysed reaction is spirilloxanthin + 4 reduced [2Fe-2S]-[ferredoxin] + 2 O2 + 4 H(+) = 2-oxospirilloxanthin + 4 oxidized [2Fe-2S]-[ferredoxin] + 3 H2O. It catalyses the reaction 2-oxospirilloxanthin + 4 reduced [2Fe-2S]-[ferredoxin] + 2 O2 + 4 H(+) = 2,2'-dioxospirilloxanthin + 4 oxidized [2Fe-2S]-[ferredoxin] + 3 H2O. It carries out the reaction spheroidene + 2 reduced [2Fe-2S]-[ferredoxin] + O2 + 2 H(+) = 2-hydroxyspheroidene + 2 oxidized [2Fe-2S]-[ferredoxin] + H2O. The enzyme catalyses 2-hydroxyspheroidene + 2 reduced [2Fe-2S]-[ferredoxin] + O2 + 2 H(+) = 2,2-dihydroxyspheroidene + 2 oxidized [2Fe-2S]-[ferredoxin] + H2O. The catalysed reaction is 2,2-dihydroxyspheroidene = spheroiden-2-one + H2O. It catalyses the reaction spirilloxanthin + 2 reduced [2Fe-2S]-[ferredoxin] + O2 + 2 H(+) = 2-hydroxyspirilloxanthin + 2 oxidized [2Fe-2S]-[ferredoxin] + H2O. It carries out the reaction 2-hydroxyspirilloxanthin + 2 reduced [2Fe-2S]-[ferredoxin] + O2 + 2 H(+) = 2,2-dihydroxyspirilloxanthin + 2 oxidized [2Fe-2S]-[ferredoxin] + H2O. The enzyme catalyses 2,2-dihydroxyspirilloxanthin = 2-oxospirilloxanthin + H2O. The catalysed reaction is 2-oxospirilloxanthin + 2 reduced [2Fe-2S]-[ferredoxin] + O2 + 2 H(+) = 2'-hydroxy-2-oxospirilloxanthin + 2 oxidized [2Fe-2S]-[ferredoxin] + H2O. It catalyses the reaction 2'-hydroxy-2-oxospirilloxanthin + 2 reduced [2Fe-2S]-[ferredoxin] + O2 + 2 H(+) = 2',2'-dihydroxy-2-oxospirilloxanthin + 2 oxidized [2Fe-2S]-[ferredoxin] + H2O. It carries out the reaction 2',2'-dihydroxy-2-oxospirilloxanthin = 2,2'-dioxospirilloxanthin + H2O. The protein operates within carotenoid biosynthesis; spheroidene biosynthesis. Its function is as follows. Involved in the biosynthesis of the carotenoid spheroidene. Catalyzes the introduction of one keto group at the C-2 position of spheroidene. In vitro, can also catalyze the introduction of two keto groups at the C-2 and C-2' positions of spirilloxanthin, but spirilloxanthin biosynthesis pathway is not present in R.capsulatus. The polypeptide is Spheroidene monooxygenase (Rhodobacter capsulatus (strain ATCC BAA-309 / NBRC 16581 / SB1003)).